The chain runs to 346 residues: Protein Rae1 (346 aa).

WD repeat units lie at residues 17-61 (ASPP…ATVP), 64-105 (MKTM…VMQV), 126-148 (LMTG…PMMT), and 255-289 (VNDI…KLKS).

This sequence belongs to the WD repeat rae1 family. As to quaternary structure, interacts with hiw; the interaction with Rae1 may protect hiw from autophagy-mediated degradation. Interacts with Nup98-96. In terms of tissue distribution, head (at protein level).

The protein resides in the cytoplasm. It is found in the perinuclear region. It localises to the nucleus. The protein localises to the nucleus envelope. Its subcellular location is the chromosome. In terms of biological role, probable component of the nuclear pore complex (NPC) which regulates the nuclear export of specific mRNAs and promotes cell cycle progression during mitosis and male meiosis. Acts with Nup98-96 to promote the nuclear export of specific mRNAs such as Moe, however it does not appear to be required for general nuclear mRNA transport. Essential mitotic and male meiotic cell cycle regulator with roles in many aspects of the cell cycle including chromatin organization and condensation, spindle assembly, chromosome segregation, and maintaining nuclear structure. During male meiosis it is required for completion of meiosis I, as well as accurate cytokinesis of the secondary spermatocytes, and postmeiotic differentiation of spermatids. Acts as a downstream regulatory target of the Hippo/SWH (Sav/Wts/Hpo) signaling pathway to promote mitotic cell cycle progression and proliferation during wing and eye development, and thereby plays a key role in integrating the regulation of proliferation with organ size control. When the Hippo/SWH signaling pathway is inactive, Rae1 acts independently of yki to increase organ size by promoting mitotic S-phase entry and increase cellular proliferation. When the Hippo/SWH signaling pathway is active it inhibits the activity of Rae1 in a Wts-dependent manner to restrict organ growth. However, Rae1 is also able to negatively regulate the levels and activity of yki likely by activating the core kinases of the Hippo/SWH signaling pathway hpo and Wts and increasing the protein levels of hpo, Mer and Wts; it is therefore likely that it functions as part of a negative feedback loop with the Hippo/SWH signaling pathway to regulate pathway homeostasis and prevent organ overgrowth. Promotes mitotic cell cycle progression, at least in part, by increasing the accumulation of mitotic cyclins such as CycB, possibly by directly up-regulating cyclin transcripts or by inhibiting the anaphase promoting complex/cyclosome (APC/C) activator fzy. Also required in presynaptic, postmitotic motor neurons to restrain synaptic terminal growth. Promotes the expression and stability of the an E3 ubiquitin ligase of hiw, and is likely to function in the regulation of synaptic growth by binding to hiw and protecting it from autophagy-mediated degradation. This is Protein Rae1 from Drosophila melanogaster (Fruit fly).